The primary structure comprises 200 residues: TATA-box-binding protein 2 (200 aa).

2 consecutive repeat copies span residues L25–V101 and I115–L192.

It belongs to the TBP family. As to quaternary structure, belongs to the TFIID complex together with the TBP-associated factors (TAFs). Binds DNA as monomer. Interacts with TAF1 (via N-terminus). Interacts with TFIIB1. Interacts with PTF2. Interacts with HAT5/ATHB-1 and ATHB-7. Component of a nuclear protein complex containing at least TATA binding proteins (TBPs, e.g. TBP1 and TBP2) and ATX1.

It localises to the nucleus. General transcription factor (GTF) that functions at the core of the DNA-binding multiprotein factor TFIID. Binding of TFIID to the TATA box is the initial transcriptional step of the pre-initiation complex (PIC), playing a role in the activation of eukaryotic genes transcribed by RNA polymerase II. Interacts with TFIIB1 and is required for activated transcription and possibly basal transcription. May act as GTF of RNA polymerase I-dependent transcription and rRNA synthesis. Forms a ternary complex with PBRP1 and the rDNA promoter region. This is TATA-box-binding protein 2 from Arabidopsis thaliana (Mouse-ear cress).